Here is a 349-residue protein sequence, read N- to C-terminus: Protein RecA (349 aa).

69–76 is a binding site for ATP; it reads GPESSGKT.

Belongs to the RecA family.

It localises to the cytoplasm. In terms of biological role, can catalyze the hydrolysis of ATP in the presence of single-stranded DNA, the ATP-dependent uptake of single-stranded DNA by duplex DNA, and the ATP-dependent hybridization of homologous single-stranded DNAs. It interacts with LexA causing its activation and leading to its autocatalytic cleavage. The polypeptide is Protein RecA (Rippkaea orientalis (strain PCC 8801 / RF-1) (Cyanothece sp. (strain PCC 8801))).